We begin with the raw amino-acid sequence, 87 residues long: Cell division topological specificity factor (87 aa).

This sequence belongs to the MinE family.

In terms of biological role, prevents the cell division inhibition by proteins MinC and MinD at internal division sites while permitting inhibition at polar sites. This ensures cell division at the proper site by restricting the formation of a division septum at the midpoint of the long axis of the cell. The protein is Cell division topological specificity factor of Aliivibrio fischeri (strain ATCC 700601 / ES114) (Vibrio fischeri).